A 120-amino-acid chain; its full sequence is Photosystem II extrinsic protein U (120 aa).

The N-terminal stretch at 1–29 (MKRLLSLLTGVLVMTGLLMALIFPQSAYA) is a signal peptide.

The protein belongs to the PsbU family. In terms of assembly, PSII is composed of 1 copy each of membrane proteins PsbA, PsbB, PsbC, PsbD, PsbE, PsbF, PsbH, PsbI, PsbJ, PsbK, PsbL, PsbM, PsbT, PsbX, PsbY, Psb30/Ycf12, peripheral proteins PsbO, CyanoQ (PsbQ), PsbU, PsbV and a large number of cofactors. It forms dimeric complexes.

Its subcellular location is the cellular thylakoid membrane. In terms of biological role, one of the extrinsic, lumenal subunits of photosystem II (PSII). PSII is a light-driven water plastoquinone oxidoreductase, using light energy to abstract electrons from H(2)O, generating a proton gradient subsequently used for ATP formation. The extrinsic proteins stabilize the structure of photosystem II oxygen-evolving complex (OEC), the ion environment of oxygen evolution and protect the OEC against heat-induced inactivation. The sequence is that of Photosystem II extrinsic protein U from Prochlorococcus marinus (strain MIT 9303).